The primary structure comprises 342 residues: uncharacterized protein (342 aa).

Residue 9-31 (LIFGGTTGIGLMTTIDFIIHNTS) coordinates NADP(+). Ser-208 contacts substrate. Residue Tyr-222 is the Proton acceptor of the active site.

Belongs to the short-chain dehydrogenases/reductases (SDR) family.

This is an uncharacterized protein from Acanthamoeba polyphaga (Amoeba).